Here is a 1679-residue protein sequence, read N- to C-terminus: Furin-like protease 2 (1679 aa).

Residues 1 to 10 (MSNTTRSSRV) show a composition bias toward polar residues. A disordered region spans residues 1–42 (MSNTTRSSRVTIGRIGTTPQITDPWSSGLEKQRPSRCGGPKS). N-linked (GlcNAc...) asparagine glycosylation is found at N3, N109, and N130. The disordered stretch occupies residues 139-164 (VSSLHSSRRTNPPSSSSSSSSNVDVD). The segment covering 147–160 (RTNPPSSSSSSSSN) has biased composition (low complexity). N205 is a glycosylation site (N-linked (GlcNAc...) asparagine). Residues 383–705 (QWYLNGGAKD…YGLMDAGAMV (323 aa)) form the Peptidase S8 domain. Residue D417 is the Charge relay system of the active site. The tract at residues 424-456 (HPDLAQNYDPEASFDINGNDSDPTPQDNGDNKH) is disordered. The segment covering 439–451 (INGNDSDPTPQDN) has biased composition (polar residues). N442 carries an N-linked (GlcNAc...) asparagine glycan. Residue H456 is the Charge relay system of the active site. 2 disulfide bridges follow: C473–C629 and C565–C595. The N-linked (GlcNAc...) asparagine glycan is linked to N480. The active-site Charge relay system is S637. In terms of domain architecture, P/Homo B spans 714 to 852 (VPPQHICKSR…QLIFYGTSTQ (139 aa)). An intrachain disulfide couples C720 to C748. N927 carries N-linked (GlcNAc...) asparagine glycosylation. FU repeat units lie at residues 961–1006 (KKIL…RSFP), 1009–1056 (VGIC…GYFE), 1060–1104 (NRTC…DTYE), 1107–1152 (DNKC…GFYA), 1156–1204 (RLEC…SEFY), 1208–1253 (EGQC…GFFV), 1256–1299 (GSLC…GYYS), 1301–1346 (RGIC…GFYK), 1348–1393 (DFGC…QYYD), and 1396–1443 (SATC…QTLA). A glycan (N-linked (GlcNAc...) asparagine) is linked at N1060. The N-linked (GlcNAc...) asparagine glycan is linked to N1181. 2 N-linked (GlcNAc...) asparagine glycosylation sites follow: N1274 and N1277. A glycan (N-linked (GlcNAc...) asparagine) is linked at N1439. The helical transmembrane segment at 1512–1532 (AIAVAICLLIITIFSIIFAVL) threads the bilayer. The Cytoplasmic portion of the chain corresponds to 1533–1679 (QRNSNHVSRN…STTSRTNIRS (147 aa)). The disordered stretch occupies residues 1660–1679 (TNAERKNHPSSTTSRTNIRS). The span at 1668-1679 (PSSTTSRTNIRS) shows a compositional bias: polar residues.

The protein belongs to the peptidase S8 family. Furin subfamily. Ca(2+) is required as a cofactor. As to expression, transient expression in a subset of central nervous system neurons during embryonic stages 12-13. Expression in developing tracheal tree from stage 13 to end of embryonic development.

It is found in the membrane. It catalyses the reaction Release of mature proteins from their proproteins by cleavage of -Arg-Xaa-Yaa-Arg-|-Zaa- bonds, where Xaa can be any amino acid and Yaa is Arg or Lys. Releases albumin, complement component C3 and von Willebrand factor from their respective precursors.. Functionally, furin is likely to represent the ubiquitous endoprotease activity within constitutive secretory pathways and capable of cleavage at the RX(K/R)R consensus motif. This Drosophila melanogaster (Fruit fly) protein is Furin-like protease 2 (Fur2).